A 361-amino-acid polypeptide reads, in one-letter code: Histidinol-phosphate aminotransferase (361 aa).

K219 is modified (N6-(pyridoxal phosphate)lysine).

It belongs to the class-II pyridoxal-phosphate-dependent aminotransferase family. Histidinol-phosphate aminotransferase subfamily. In terms of assembly, homodimer. Pyridoxal 5'-phosphate is required as a cofactor.

It catalyses the reaction L-histidinol phosphate + 2-oxoglutarate = 3-(imidazol-4-yl)-2-oxopropyl phosphate + L-glutamate. It participates in amino-acid biosynthesis; L-histidine biosynthesis; L-histidine from 5-phospho-alpha-D-ribose 1-diphosphate: step 7/9. This is Histidinol-phosphate aminotransferase from Cereibacter sphaeroides (strain ATCC 17023 / DSM 158 / JCM 6121 / CCUG 31486 / LMG 2827 / NBRC 12203 / NCIMB 8253 / ATH 2.4.1.) (Rhodobacter sphaeroides).